The sequence spans 181 residues: Putative D-tyrosyl-tRNA(Tyr) deacylase 2 (181 aa).

Belongs to the DTD family. Highly divergent. Homodimer.

It localises to the cytoplasm. May hydrolyze D-tyrosyl-tRNA(Tyr) into D-tyrosine and free tRNA(Tyr). Could be a defense mechanism against a harmful effect of D-tyrosine. In Leishmania major, this protein is Putative D-tyrosyl-tRNA(Tyr) deacylase 2.